We begin with the raw amino-acid sequence, 195 residues long: Protein GrpE (195 aa).

Belongs to the GrpE family. As to quaternary structure, homodimer.

It localises to the cytoplasm. Participates actively in the response to hyperosmotic and heat shock by preventing the aggregation of stress-denatured proteins, in association with DnaK and GrpE. It is the nucleotide exchange factor for DnaK and may function as a thermosensor. Unfolded proteins bind initially to DnaJ; upon interaction with the DnaJ-bound protein, DnaK hydrolyzes its bound ATP, resulting in the formation of a stable complex. GrpE releases ADP from DnaK; ATP binding to DnaK triggers the release of the substrate protein, thus completing the reaction cycle. Several rounds of ATP-dependent interactions between DnaJ, DnaK and GrpE are required for fully efficient folding. The sequence is that of Protein GrpE from Blochmanniella floridana.